A 337-amino-acid chain; its full sequence is 4-hydroxy-3-methylbut-2-enyl diphosphate reductase (337 aa).

Cys-25 is a [4Fe-4S] cluster binding site. (2E)-4-hydroxy-3-methylbut-2-enyl diphosphate contacts are provided by His-54 and His-87. The dimethylallyl diphosphate site is built by His-54 and His-87. Residues His-54 and His-87 each contribute to the isopentenyl diphosphate site. A [4Fe-4S] cluster-binding site is contributed by Cys-109. Position 137 (His-137) interacts with (2E)-4-hydroxy-3-methylbut-2-enyl diphosphate. His-137 is a binding site for dimethylallyl diphosphate. His-137 contributes to the isopentenyl diphosphate binding site. Glu-139 acts as the Proton donor in catalysis. Thr-177 is a binding site for (2E)-4-hydroxy-3-methylbut-2-enyl diphosphate. Residue Cys-207 participates in [4Fe-4S] cluster binding. Positions 235, 236, 237, and 280 each coordinate (2E)-4-hydroxy-3-methylbut-2-enyl diphosphate. The dimethylallyl diphosphate site is built by Ser-235, Ser-236, Asn-237, and Ser-280. Residues Ser-235, Ser-236, Asn-237, and Ser-280 each contribute to the isopentenyl diphosphate site.

This sequence belongs to the IspH family. The cofactor is [4Fe-4S] cluster.

The enzyme catalyses isopentenyl diphosphate + 2 oxidized [2Fe-2S]-[ferredoxin] + H2O = (2E)-4-hydroxy-3-methylbut-2-enyl diphosphate + 2 reduced [2Fe-2S]-[ferredoxin] + 2 H(+). The catalysed reaction is dimethylallyl diphosphate + 2 oxidized [2Fe-2S]-[ferredoxin] + H2O = (2E)-4-hydroxy-3-methylbut-2-enyl diphosphate + 2 reduced [2Fe-2S]-[ferredoxin] + 2 H(+). It functions in the pathway isoprenoid biosynthesis; dimethylallyl diphosphate biosynthesis; dimethylallyl diphosphate from (2E)-4-hydroxy-3-methylbutenyl diphosphate: step 1/1. Its pathway is isoprenoid biosynthesis; isopentenyl diphosphate biosynthesis via DXP pathway; isopentenyl diphosphate from 1-deoxy-D-xylulose 5-phosphate: step 6/6. Catalyzes the conversion of 1-hydroxy-2-methyl-2-(E)-butenyl 4-diphosphate (HMBPP) into a mixture of isopentenyl diphosphate (IPP) and dimethylallyl diphosphate (DMAPP). Acts in the terminal step of the DOXP/MEP pathway for isoprenoid precursor biosynthesis. This is 4-hydroxy-3-methylbut-2-enyl diphosphate reductase from Leifsonia xyli subsp. xyli (strain CTCB07).